The sequence spans 852 residues: Disks large homolog 2 (852 aa).

S-palmitoyl cysteine attachment occurs at residues cysteine 5 and cysteine 7. Serine 28 bears the Phosphoserine mark. Tyrosine 58 carries the phosphotyrosine modification. Phosphoserine is present on serine 65. PDZ domains follow at residues 98 to 184 and 193 to 279; these read EITL…VRRR and EIKL…VGKP. Serine 307, serine 328, serine 360, serine 365, serine 406, and serine 414 each carry phosphoserine. In terms of domain architecture, PDZ 3 spans 421–501; the sequence is KVVLHKGSTG…QTVTIIAQYQ (81 aa). Tyrosine 505 bears the Phosphotyrosine mark. Residues serine 528, serine 530, and serine 553 each carry the phosphoserine modification. Residues 536-606 form the SH3 domain; sequence KRSLYVRAMF…PSKRRVERKE (71 aa). The Guanylate kinase-like domain maps to 662 to 837; that stretch reads TRPVIILGPM…IYNQCKLVIE (176 aa). Residues tyrosine 732 and tyrosine 737 each carry the phosphotyrosine modification.

The protein belongs to the MAGUK family. As to quaternary structure, interacts through its PDZ domains with NETO1. Interacts with NOS1/nNOS through second PDZ domain. Interacts with KCNJ2/Kir2.1 (via C-terminus) through one of its PDZ domains. Interacts with KCNJ4. Interacts with FRMPD4 (via C-terminus). Interacts with LRFN1. Interacts with LRFN2 and LRFN4. Interacts with FASLG. Interacts with ADAM22. Interacts with DGKI (via PDZ-binding motif). In terms of processing, palmitoylation of isoform 1 and isoform 2 is not required for targeting to postsynaptic density. Detected in juxtaparanodal zones in the central nervous system and at nerve terminal plexuses of basket cells in the cerebellum (at protein level). Brain. High levels in cerebellar Purkinje cells. Expressed in pyramidal cells of the Ammons's horn and granular cells of the dentate gyrus in the hippocampus as well as cerebral cortex and striatum. High levels in dorsal horn of spinal cord.

Its subcellular location is the cell membrane. It localises to the postsynaptic density. It is found in the synapse. The protein resides in the cell projection. The protein localises to the axon. Its subcellular location is the membrane. It localises to the perikaryon. In terms of biological role, required for perception of chronic pain through NMDA receptor signaling. Regulates surface expression of NMDA receptors in dorsal horn neurons of the spinal cord. Interacts with the cytoplasmic tail of NMDA receptor subunits as well as inward rectifying potassium channels. Involved in regulation of synaptic stability at cholinergic synapses. Part of the postsynaptic protein scaffold of excitatory synapses. This is Disks large homolog 2 (Dlg2) from Rattus norvegicus (Rat).